The chain runs to 172 residues: C-phycocyanin subunit beta (172 aa).

Asn72 is modified (N4-methylasparagine). Cys82 and Cys153 together coordinate (2R,3E)-phycocyanobilin.

This sequence belongs to the phycobiliprotein family. As to quaternary structure, heterodimer of an alpha and a beta subunit, which further assembles into trimers and the trimers into hexamers. Post-translationally, contains two covalently linked bilin chromophores. The chromophore on position 82 is added by the phycocyanobilin lyase CpcUS, while the chromophore on position 153 is added by the phycocyanobilin lyase CpcT.

The protein localises to the cellular thylakoid membrane. Light-harvesting photosynthetic bile pigment-protein from the phycobiliprotein complex (phycobilisome, PBS). Phycocyanin is the major phycobiliprotein in the PBS rod. The protein is C-phycocyanin subunit beta (cpcB) of Picosynechococcus sp. (strain ATCC 27264 / PCC 7002 / PR-6) (Agmenellum quadruplicatum).